The primary structure comprises 360 residues: Photosystem II protein D1 (360 aa).

3 consecutive transmembrane segments (helical) span residues tyrosine 29–serine 46, histidine 118–leucine 133, and tryptophan 142–alanine 156. Residue histidine 118 participates in chlorophyll a binding. Tyrosine 126 contacts pheophytin a. [CaMn4O5] cluster contacts are provided by aspartate 170 and glutamate 189. A helical membrane pass occupies residues phenylalanine 197 to leucine 218. Histidine 198 is a binding site for chlorophyll a. A quinone is bound by residues histidine 215 and serine 264 to phenylalanine 265. Histidine 215 lines the Fe cation pocket. Residue histidine 272 coordinates Fe cation. Residues phenylalanine 274 to methionine 288 traverse the membrane as a helical segment. Residues histidine 332, glutamate 333, aspartate 342, and alanine 344 each contribute to the [CaMn4O5] cluster site. The propeptide occupies serine 345–glycine 360.

This sequence belongs to the reaction center PufL/M/PsbA/D family. In terms of assembly, PSII is composed of 1 copy each of membrane proteins PsbA, PsbB, PsbC, PsbD, PsbE, PsbF, PsbH, PsbI, PsbJ, PsbK, PsbL, PsbM, PsbT, PsbX, PsbY, PsbZ, Psb30/Ycf12, at least 3 peripheral proteins of the oxygen-evolving complex and a large number of cofactors. It forms dimeric complexes. The D1/D2 heterodimer binds P680, chlorophylls that are the primary electron donor of PSII, and subsequent electron acceptors. It shares a non-heme iron and each subunit binds pheophytin, quinone, additional chlorophylls, carotenoids and lipids. D1 provides most of the ligands for the Mn4-Ca-O5 cluster of the oxygen-evolving complex (OEC). There is also a Cl(-1) ion associated with D1 and D2, which is required for oxygen evolution. The PSII complex binds additional chlorophylls, carotenoids and specific lipids. serves as cofactor. Tyr-161 forms a radical intermediate that is referred to as redox-active TyrZ, YZ or Y-Z. In terms of processing, C-terminally processed by CTPA; processing is essential to allow assembly of the oxygen-evolving complex and thus photosynthetic growth.

It localises to the plastid. Its subcellular location is the chloroplast thylakoid membrane. It catalyses the reaction 2 a plastoquinone + 4 hnu + 2 H2O = 2 a plastoquinol + O2. Photosystem II (PSII) is a light-driven water:plastoquinone oxidoreductase that uses light energy to abstract electrons from H(2)O, generating O(2) and a proton gradient subsequently used for ATP formation. It consists of a core antenna complex that captures photons, and an electron transfer chain that converts photonic excitation into a charge separation. The D1/D2 (PsbA/PsbD) reaction center heterodimer binds P680, the primary electron donor of PSII as well as several subsequent electron acceptors. The sequence is that of Photosystem II protein D1 from Trieres chinensis (Marine centric diatom).